A 374-amino-acid chain; its full sequence is tRNA-specific 2-thiouridylase MnmA (374 aa).

Residues 12–19 (GMSGGVDS) and M38 contribute to the ATP site. The interaction with target base in tRNA stretch occupies residues 98-100 (NPD). C103 acts as the Nucleophile in catalysis. Cysteines 103 and 207 form a disulfide. G128 is an ATP binding site. Positions 157-159 (KDQ) are interaction with tRNA. Residue C207 is the Cysteine persulfide intermediate of the active site. The tract at residues 321–322 (RY) is interaction with tRNA.

The protein belongs to the MnmA/TRMU family.

It localises to the cytoplasm. It catalyses the reaction S-sulfanyl-L-cysteinyl-[protein] + uridine(34) in tRNA + AH2 + ATP = 2-thiouridine(34) in tRNA + L-cysteinyl-[protein] + A + AMP + diphosphate + H(+). In terms of biological role, catalyzes the 2-thiolation of uridine at the wobble position (U34) of tRNA, leading to the formation of s(2)U34. The polypeptide is tRNA-specific 2-thiouridylase MnmA (Aliivibrio fischeri (strain MJ11) (Vibrio fischeri)).